The primary structure comprises 592 residues: Aspartate--tRNA ligase (592 aa).

Position 171 (Glu-171) interacts with L-aspartate. The segment at Gln-195–Lys-198 is aspartate. An L-aspartate-binding site is contributed by Arg-217. ATP contacts are provided by residues Arg-217–Glu-219 and Gln-226. His-448 contacts L-aspartate. ATP is bound at residue Glu-482. Arg-489 provides a ligand contact to L-aspartate. Gly-534–Arg-537 serves as a coordination point for ATP.

This sequence belongs to the class-II aminoacyl-tRNA synthetase family. Type 1 subfamily. As to quaternary structure, homodimer.

Its subcellular location is the cytoplasm. The catalysed reaction is tRNA(Asp) + L-aspartate + ATP = L-aspartyl-tRNA(Asp) + AMP + diphosphate. Functionally, catalyzes the attachment of L-aspartate to tRNA(Asp) in a two-step reaction: L-aspartate is first activated by ATP to form Asp-AMP and then transferred to the acceptor end of tRNA(Asp). The polypeptide is Aspartate--tRNA ligase (Vibrio parahaemolyticus serotype O3:K6 (strain RIMD 2210633)).